Consider the following 330-residue polypeptide: AH receptor-interacting protein (330 aa).

The PPIase FKBP-type domain maps to 31–121; sequence GTKATFHYRT…KDPLEGQRHC (91 aa). At Ser43 the chain carries Phosphoserine. 3 TPR repeats span residues 179–212, 231–264, and 265–298; these read VPLI…LKNL, TPLL…YDDN, and VKAY…DPAL.

In terms of assembly, interacts with RET in the pituitary gland; this interaction prevents the formation of the AIP-survivin complex. Widely expressed. Higher levels seen in the heart, placenta and skeletal muscle. Not expressed in the liver.

It localises to the cytoplasm. Functionally, may play a positive role in AHR-mediated (aromatic hydrocarbon receptor) signaling, possibly by influencing its receptivity for ligand and/or its nuclear targeting. Cellular negative regulator of the hepatitis B virus (HBV) X protein. The protein is AH receptor-interacting protein (AIP) of Homo sapiens (Human).